Reading from the N-terminus, the 393-residue chain is Ubiquitin-like modifier-activating enzyme 5 (393 aa).

Residues G75, D96, K119, N142, and N175 each contribute to the ATP site. The Zn(2+) site is built by C217 and C220. The active-site Glycyl thioester intermediate is C241. 2 residues coordinate Zn(2+): C294 and C299.

The protein belongs to the ubiquitin-activating E1 family. UBA5 subfamily.

In terms of biological role, E1-like enzyme which activates UFM1. The sequence is that of Ubiquitin-like modifier-activating enzyme 5 from Bombyx mori (Silk moth).